The following is a 2467-amino-acid chain: Polyprotein P1234 (2467 aa).

The region spanning 27-258 (ESQQVTPNDH…ESRKLLRSWH (232 aa)) is the Alphavirus-like MT domain. The nsP1 membrane-binding stretch occupies residues 243-262 (GSTLYTESRKLLRSWHLPSV). 2 S-palmitoyl cysteine; by host lipidation sites follow: Cys416 and Cys418. The (+)RNA virus helicase ATP-binding domain occupies 689–841 (DLINPPFHEF…HNICTRVLHK (153 aa)). 720-727 (GVPGSGKS) lines the a ribonucleoside 5'-triphosphate pocket. In terms of domain architecture, (+)RNA virus helicase C-terminal spans 842–990 (SISRRCTLPV…LEEWHEEHDG (149 aa)). The region spanning 1003–1325 (DPFQNKAKVC…QKLSSMYACN (323 aa)) is the Peptidase C9 domain. The nucleolus localization signal stretch occupies residues 1004–1023 (PFQNKAKVCWAKCLVQVLET). Cys1012 acts as the For cysteine protease nsP2 activity in catalysis. Residues 1056–1065 (TRYYGVDLDS) carry the Nuclear export signal motif. The active-site For cysteine protease nsP2 activity is the His1081. The Nuclear localization signal motif lies at 1180-1184 (PHKRV). Residues 1333–1492 (APSYRVRRAD…KIQEAIDRRT (160 aa)) enclose the Macro domain. The ADP-D-ribose site is built by Asp1342, Asn1356, Gly1364, Gly1444, and Phe1446. Zn(2+) is bound by residues Cys1594, Cys1596, Cys1619, and Cys1637. The tract at residues 1768–1803 (KVATEPPLEPEAPIPAPRKRRTTSTSPPHNPEDFVP) is disordered. The span at 1774-1783 (PLEPEAPIPA) shows a compositional bias: pro residues. 2 short sequence motifs (FGDF; binding to host G3BP1) span residues 1820–1823 (FGDL) and 1841–1844 (FGDI). One can recognise a RdRp catalytic domain in the interval 2221–2336 (DAVLETDIAS…HGVRSDPLMA (116 aa)).

In terms of assembly, interacts with non-structural protein 3. Interacts with RNA-directed RNA polymerase nsP4. Interacts with protease nsP2. interacts with itself. As to quaternary structure, interacts with mRNA-capping enzyme nsP1. Interacts with host DDX1. Interacts with host DDX3. Interacts (via C-terminus) with host G3BP1; this interaction inhibits the formation of host stress granules on viral mRNAs and the nsp3-G3BP1 complexes bind viral RNAs and probably orchestrate the assembly of viral replication complexes. Interacts (via C-terminus) with host G3BP2; this interaction inhibits the formation of host stress granules on viral mRNAs and the nsp3-G3BP2 complexes bind viral RNAs and probably orchestrate the assembly of viral replication complexes. Interacts with mRNA-capping enzyme nsP1. Interacts with protease nsP2. interacts with itself. In terms of assembly, interacts with RNA-directed RNA polymerase nsP4. Interacts with mRNA-capping enzyme nsP1. Interacts with KPNA1/karyopherin-alpha1; this interaction probably allows the active transport of protease nsP2 into the host nucleus. Mg(2+) serves as cofactor. Mn(2+) is required as a cofactor. In terms of processing, specific enzymatic cleavages in vivo yield mature proteins. The processing of the polyprotein is temporally regulated. In early stages (1.7 hpi), P1234 is first cleaved in trans through its nsP2 protease activity, releasing P123' and nsP4, which associate to form the early replication complex. At the same time, P1234 is also cut at the nsP1/nsP2 site early in infection but with lower efficiency. After replication of the viral minus-strand RNAs (4 hpi), the polyproteins are cut at the nsP1/nsP2 and nsP2/nsP3 sites very efficiently, preventing accumulation of P123' and P1234 and allowing the formation of the late replication complex. NsP3'/nsP4 site is not cleaved anymore and P34 is produced rather than nsP4. Specific enzymatic cleavages in vivo yield mature proteins. The processing of the polyprotein is temporally regulated. In early stages (1.7 hpi), P123 is cleaved at the nsP1/nsP2 site with low efficiency. After replication of the viral minus-strand RNAs (4 hpi), the polyproteins are cut at the nsP1/nsP2 and nsP2/nsP3 sites very efficiently, preventing accumulation of P123 and allowing the formation of the late replication complex. Post-translationally, palmitoylated by host palmitoyltransferases ZDHHC2 and ZDHHC19. In terms of processing, phosphorylated by host on serines and threonines. Ubiquitinated; targets the protein for rapid degradation via the ubiquitin system. Nsp4 is present in extremely low quantities due to low frequency of translation through the amber stop-codon and the degradation by the ubiquitin pathway.

The protein localises to the host cytoplasmic vesicle membrane. It localises to the host cell membrane. The protein resides in the host cell projection. It is found in the host filopodium. Its subcellular location is the host nucleus. The protein localises to the host cytoplasm. It catalyses the reaction GTP + S-adenosyl-L-methionine = N(7)-methyl-GTP + S-adenosyl-L-homocysteine. The catalysed reaction is N(7)-methyl-GTP + L-histidyl-[protein] = N(tele)-(N(7)-methylguanosine 5'-phospho)-L-histidyl-[protein] + diphosphate. It carries out the reaction N(tele)-(N(7)-methylguanosine 5'-phospho)-L-histidyl-[protein] + a 5'-end diphospho-(purine-ribonucleoside) in mRNA + H(+) = a 5'-end (N(7)-methyl 5'-triphosphoguanosine)-(purine-ribonucleoside) in mRNA + L-histidyl-[protein]. The enzyme catalyses a 5'-end triphospho-ribonucleoside in mRNA + H2O = a 5'-end diphospho-ribonucleoside in mRNA + phosphate + H(+). It catalyses the reaction a ribonucleoside 5'-triphosphate + H2O = a ribonucleoside 5'-diphosphate + phosphate + H(+). The catalysed reaction is ATP + H2O = ADP + phosphate + H(+). It carries out the reaction RNA(n) + a ribonucleoside 5'-triphosphate = RNA(n+1) + diphosphate. The enzyme catalyses RNA(n) + ATP = RNA(n)-3'-adenine ribonucleotide + diphosphate. It catalyses the reaction 4-O-(ADP-D-ribosyl)-L-aspartyl-[protein] + H2O = L-aspartyl-[protein] + ADP-D-ribose + H(+). The catalysed reaction is 5-O-(ADP-D-ribosyl)-L-glutamyl-[protein] + H2O = L-glutamyl-[protein] + ADP-D-ribose + H(+). It carries out the reaction ADP-alpha-D-ribose 1''-phosphate + H2O = ADP-D-ribose + phosphate. Inactive precursor of the viral replicase, which is activated by cleavages carried out by the viral protease nsP2. In terms of biological role, the early replication complex formed by the polyprotein P123 and nsP4 synthesizes minus-strand RNAs. As soon P123 is cleaved into mature proteins, the plus-strand RNAs synthesis begins. Functionally, the early replication complex formed by the polyprotein P123' and nsP4 synthesizes minus-strand RNAs. Polyprotein P123' is a short-lived polyprotein that accumulates during early stage of infection. As soon P123' is cleaved into mature proteins, the plus-strand RNAs synthesis begins. Its function is as follows. Cytoplasmic capping enzyme that catalyzes two virus-specific reactions: methyltransferase and nsP1 guanylyltransferase. mRNA-capping is necessary since all viral RNAs are synthesized in the cytoplasm, and host capping enzymes are restricted to the nucleus. The enzymatic reaction involves a covalent link between 7-methyl-GMP and nsP1, whereas eukaryotic capping enzymes form a covalent complex only with GMP. nsP1 capping consists in the following reactions: GTP is first methylated into 7-methyl-GMP and then is covalently linked to nsP1 to form the m7GMp-nsP1 complex from which 7-methyl-GMP complex is transferred to the mRNA to create the cap structure. NsP1 is needed for the initiation of the minus-strand RNAs synthesis. Probably serves as a membrane anchor for the replication complex composed of nsP1-nsP4. Palmitoylated nsP1 is remodeling host cell cytoskeleton, and induces filopodium-like structure formation at the surface of the host cell. Multifunctional protein whose N-terminus is part of the RNA polymerase complex and displays NTPase, RNA triphosphatase and helicase activities. NTPase and RNA triphosphatase are involved in viral RNA capping and helicase keeps a check on the dsRNA replication intermediates. The C-terminus harbors a protease that specifically cleaves the polyproteins and releases the mature proteins. Required for the shutoff of minus-strand RNAs synthesis. Specifically inhibits the host IFN response by promoting the nuclear export of host STAT1. Also inhibits host transcription by inducing rapid proteasome-dependent degradation of POLR2A, a catalytic subunit of the RNAPII complex. The resulting inhibition of cellular protein synthesis serves to ensure maximal viral gene expression and to evade host immune response. In terms of biological role, seems to be essential for minus-strand RNAs and subgenomic 26S mRNAs synthesis. Displays mono-ADP-ribosylhydrolase activity. ADP-ribosylation is a post-translational modification that controls various processes of the host cell and the virus probably needs to revert it for optimal viral replication. Binds proteins of FXR family and sequesters them into the viral RNA replication complexes thereby inhibiting the formation of host stress granules on viral mRNAs. The nsp3'-FXR complexes bind viral RNAs and probably orchestrate the assembly of viral replication complexes, thanks to the ability of FXR family members to self-assemble and bind DNA. Functionally, seems to be essential for minus-strand RNAs and subgenomic 26S mRNAs synthesis. Displays mono-ADP-ribosylhydrolase activity. ADP-ribosylation is a post-translantional modification that controls various processes of the host cell and the virus probably needs to revert it for optimal viral replication. Binds proteins of G3BP family and sequesters them into the viral RNA replication complexes thereby inhibiting the formation of host stress granules on viral mRNAs. The nsp3-G3BP complexes bind viral RNAs and probably orchestrate the assembly of viral replication complexes, thanks to the ability of G3BP family members to self-assemble and bind DNA. Its function is as follows. RNA dependent RNA polymerase. Replicates genomic and antigenomic RNA by recognizing replications specific signals. The early replication complex formed by the polyprotein P123 and nsP4 synthesizes minus-strand RNAs. The late replication complex composed of fully processed nsP1-nsP4 is responsible for the production of genomic and subgenomic plus-strand RNAs. The core catalytic domain of nsP4 also possesses terminal adenylyltransferase (TATase) activity that is probably involved in maintenance and repair of the poly(A) tail, an element required for replication of the viral genome. The sequence is that of Polyprotein P1234 from Getah virus (GETV).